The chain runs to 364 residues: MLRPKIRVLIVDDSASVRQILTTILNADPDIEVMASAADPFAAARRLQDEIPDVIILDIEMPRMDGITFLRKIMAQRPIPVIICSTLTEERSDVMFEAFEAGAFDIVPKPRIDTTHALLEASARMCDAVKAAARARIRPRRPPRMVVEAKLTADAIMPPPVSGRARPTTERLVCIGVSTGGTEALRDVLECLPAKAPAILIVQHMPQGFTAAFAKRLDSLCEIEVREAQDGDVVVQGCAYIAPGGRHMLLQRTGQRYHIAIKDGPPVSRHRPSADVLFRSAAQYAGPNALGIIMTGMGDDGARGLLEMHKLGATTRAQDEESCVVFGMPKEAIALGGVDKVVPLAQIPREIMLWQDAKQPVPTV.

The Response regulatory domain occupies 7–124 (RVLIVDDSAS…THALLEASAR (118 aa)). Aspartate 58 bears the 4-aspartylphosphate mark. Residues 167–358 (PTTERLVCIG…REIMLWQDAK (192 aa)) enclose the CheB-type methylesterase domain. Active-site residues include serine 178, histidine 204, and aspartate 300.

Belongs to the CheB family. Post-translationally, phosphorylated by CheA. Phosphorylation of the N-terminal regulatory domain activates the methylesterase activity.

The protein resides in the cytoplasm. It carries out the reaction [protein]-L-glutamate 5-O-methyl ester + H2O = L-glutamyl-[protein] + methanol + H(+). It catalyses the reaction L-glutaminyl-[protein] + H2O = L-glutamyl-[protein] + NH4(+). Its function is as follows. Involved in chemotaxis. Part of a chemotaxis signal transduction system that modulates chemotaxis in response to various stimuli. Catalyzes the demethylation of specific methylglutamate residues introduced into the chemoreceptors (methyl-accepting chemotaxis proteins or MCP) by CheR. Also mediates the irreversible deamidation of specific glutamine residues to glutamic acid. The chain is Protein-glutamate methylesterase/protein-glutamine glutaminase 3 from Rhodopseudomonas palustris (strain BisB18).